Reading from the N-terminus, the 440-residue chain is Methionine aminopeptidase 2-2 (440 aa).

Residues M1–E102 are disordered. Residues D36–E46 are compositionally biased toward acidic residues. Over residues A56–S70 the composition is skewed to basic residues. H194 contributes to the substrate binding site. Residues D214, D225, and H294 each coordinate a divalent metal cation. H302 is a binding site for substrate. Residues E327 and E421 each contribute to the a divalent metal cation site.

The protein belongs to the peptidase M24A family. Methionine aminopeptidase eukaryotic type 2 subfamily. It depends on Co(2+) as a cofactor. Zn(2+) serves as cofactor. Mn(2+) is required as a cofactor. Requires Fe(2+) as cofactor.

Its subcellular location is the cytoplasm. It catalyses the reaction Release of N-terminal amino acids, preferentially methionine, from peptides and arylamides.. Functionally, cotranslationally removes the N-terminal methionine from nascent proteins. The N-terminal methionine is often cleaved when the second residue in the primary sequence is small and uncharged (Met-Ala-, Cys, Gly, Pro, Ser, Thr, or Val). This is Methionine aminopeptidase 2-2 from Colletotrichum graminicola (strain M1.001 / M2 / FGSC 10212) (Maize anthracnose fungus).